Here is a 413-residue protein sequence, read N- to C-terminus: Imidazolonepropionase (413 aa).

Fe(3+) is bound by residues His-79 and His-81. Zn(2+) is bound by residues His-79 and His-81. 4-imidazolone-5-propanoate is bound by residues Arg-88, Tyr-151, and His-184. Tyr-151 serves as a coordination point for N-formimidoyl-L-glutamate. His-248 provides a ligand contact to Fe(3+). Zn(2+) is bound at residue His-248. Glu-251 serves as a coordination point for 4-imidazolone-5-propanoate. Asp-322 serves as a coordination point for Fe(3+). Residue Asp-322 coordinates Zn(2+). Residues Asn-324 and Gly-326 each coordinate N-formimidoyl-L-glutamate. Ser-327 contributes to the 4-imidazolone-5-propanoate binding site.

It belongs to the metallo-dependent hydrolases superfamily. HutI family. Zn(2+) is required as a cofactor. Fe(3+) serves as cofactor.

Its subcellular location is the cytoplasm. It carries out the reaction 4-imidazolone-5-propanoate + H2O = N-formimidoyl-L-glutamate. It functions in the pathway amino-acid degradation; L-histidine degradation into L-glutamate; N-formimidoyl-L-glutamate from L-histidine: step 3/3. In terms of biological role, catalyzes the hydrolytic cleavage of the carbon-nitrogen bond in imidazolone-5-propanoate to yield N-formimidoyl-L-glutamate. It is the third step in the universal histidine degradation pathway. In Fusobacterium nucleatum subsp. nucleatum (strain ATCC 25586 / DSM 15643 / BCRC 10681 / CIP 101130 / JCM 8532 / KCTC 2640 / LMG 13131 / VPI 4355), this protein is Imidazolonepropionase.